Here is a 458-residue protein sequence, read N- to C-terminus: Zinc finger protein 239 (458 aa).

A Glycyl lysine isopeptide (Lys-Gly) (interchain with G-Cter in SUMO2) cross-link involves residue K108. At S191 the chain carries Phosphoserine. C2H2-type zinc fingers lie at residues 207 to 229 (YECSQCGKNFSQSSELLLHQRDH), 235 to 257 (YKCEQCGKGFTRSSSLLIHQAVH), 263 to 285 (YKCDKCGKGFTRSSSLLIHHAVH), 291 to 313 (YKCDKCGKGFSQSSKLHIHQRVH), 319 to 341 (YECEECGMSFSQRSNLHIHQRVH), 347 to 369 (YKCGECGKGFSQSSNLHIHRCIH), 375 to 397 (YQCYECGKGFSQSSDLRIHLRVH), 403 to 425 (YHCGKCGKGFSQSSKLLIHQRVH), and 431 to 453 (YECSKCGKGFSQSSNLHIHQRVH).

This sequence belongs to the krueppel C2H2-type zinc-finger protein family.

The protein localises to the nucleus. Its function is as follows. May be involved in transcriptional regulation. In Homo sapiens (Human), this protein is Zinc finger protein 239 (ZNF239).